The following is a 360-amino-acid chain: Probable protein phosphatase 2C 54 (360 aa).

The tract at residues 1 to 39 is disordered; it reads MCVEESEGAERLDFGEPAAAAADAGKSKSKSPDELPSPR. Positions 65–325 constitute a PPM-type phosphatase domain; sequence RSGDWSDIGG…DNLTAVLVSF (261 aa). Mn(2+) is bound by residues aspartate 109, glycine 110, aspartate 273, and aspartate 316.

The protein belongs to the PP2C family. The cofactor is Mg(2+). Mn(2+) is required as a cofactor.

It carries out the reaction O-phospho-L-seryl-[protein] + H2O = L-seryl-[protein] + phosphate. The catalysed reaction is O-phospho-L-threonyl-[protein] + H2O = L-threonyl-[protein] + phosphate. This chain is Probable protein phosphatase 2C 54, found in Oryza sativa subsp. japonica (Rice).